Here is a 59-residue protein sequence, read N- to C-terminus: Large ribosomal subunit protein uL30 (59 aa).

Belongs to the universal ribosomal protein uL30 family. As to quaternary structure, part of the 50S ribosomal subunit.

The polypeptide is Large ribosomal subunit protein uL30 (Staphylococcus saprophyticus subsp. saprophyticus (strain ATCC 15305 / DSM 20229 / NCIMB 8711 / NCTC 7292 / S-41)).